Here is a 208-residue protein sequence, read N- to C-terminus: Uracil phosphoribosyltransferase (208 aa).

5-phospho-alpha-D-ribose 1-diphosphate is bound by residues R78, R103, and 130–138 (DPMLATGGS). Uracil contacts are provided by residues I193 and 198 to 200 (GDA). A 5-phospho-alpha-D-ribose 1-diphosphate-binding site is contributed by D199.

It belongs to the UPRTase family. It depends on Mg(2+) as a cofactor.

It carries out the reaction UMP + diphosphate = 5-phospho-alpha-D-ribose 1-diphosphate + uracil. The protein operates within pyrimidine metabolism; UMP biosynthesis via salvage pathway; UMP from uracil: step 1/1. Its activity is regulated as follows. Allosterically activated by GTP. Catalyzes the conversion of uracil and 5-phospho-alpha-D-ribose 1-diphosphate (PRPP) to UMP and diphosphate. This is Uracil phosphoribosyltransferase from Glaesserella parasuis serovar 5 (strain SH0165) (Haemophilus parasuis).